We begin with the raw amino-acid sequence, 184 residues long: Cytidylate kinase (184 aa).

An ATP-binding site is contributed by 8 to 16 (GQPGSGKTT).

Belongs to the cytidylate kinase family. Type 2 subfamily.

It is found in the cytoplasm. The enzyme catalyses CMP + ATP = CDP + ADP. It carries out the reaction dCMP + ATP = dCDP + ADP. The polypeptide is Cytidylate kinase (Pyrobaculum calidifontis (strain DSM 21063 / JCM 11548 / VA1)).